A 494-amino-acid chain; its full sequence is MDMHCKADPFSAMHRHGGVNQLGGVFVNGRPLPDVVRQRIVELAHQGVRPCDISRQLRVSHGCVSKILGRYYETGSIKPGVIGGSKPKVATPKVVDKIADYKRQNPTMFAWEIRDRLLAEGICDNDTVPSVSSINRIIRTKVQQPFHPTPDGTPVSTPGHTLVPSTASPPVSSASNDPVGSYSINGILGIPRSNGEKRKRDEDGSDGSGPNGDSQSSVESLRKHLRADNFTQQQLEALDRVFERPSYPDVFQSAEHIKSEQASEYSLPALTPGLDEVKSSLSASGNADLGSNVSGPQSYPVVTESFASHLYLKQEPHEASLTPFTPSSLASSGLADIQPFQMALTVDASTPTYSSFTHHGPPYGQFGSQPLIAGRDMSSTTLPGYPPHVPPTGQGSYPTSTLAGMVPGTNVSVHHSVQPVECCSCLSSSKPCLFHCRTGSGSEFSGNPYSHPQYTTYNEAWRFSNPALLSSPYYYSATSRGSAPPTAATAYDRH.

Positions 15 to 141 form a DNA-binding region, paired; that stretch reads RHGGVNQLGG…SSINRIIRTK (127 aa). Residues 18 to 74 form a PAI subdomain region; the sequence is GVNQLGGVFVNGRPLPDVVRQRIVELAHQGVRPCDISRQLRVSHGCVSKILGRYYET. The tract at residues 93 to 141 is RED subdomain; the sequence is KVVDKIADYKRQNPTMFAWEIRDRLLAEGICDNDTVPSVSSINRIIRTK. The disordered stretch occupies residues 142–221; it reads VQQPFHPTPD…GDSQSSVESL (80 aa). Low complexity predominate over residues 163-175; sequence VPSTASPPVSSAS.

In terms of tissue distribution, expression becomes spatially localized at mid-gastrula stages and is localized to the nervous system (midbrain, hindbrain, spinal cord), sensory organs (optic vesicle and stalk, otic vesicle), visceral arches, developing excretory system (pronephros, pronephric duct, rectal diverticulum, proctodaeum) and thryoid gland. Splicing does not appear to be tissue-specific.

The protein resides in the nucleus. Its function is as follows. Probable transcription factor. Involved in kidney development, acting synergistically with lhx1/lim-1 in pronephric morphogenesis during the tailbud stages. This Xenopus laevis (African clawed frog) protein is Paired box protein Pax-2-B (pax2-b).